The primary structure comprises 150 residues: UPF0756 membrane protein YE1142 (150 aa).

4 consecutive transmembrane segments (helical) span residues 1–21 (MAALDPTLLILLVLAGLGIIS), 51–71 (YGLTIGILILTIGVMTPIASG), 88–108 (ILAIVVGVAVSWLGGRGVSLM), and 114–134 (VVAGLLVGTVLGVALFRGVPV).

Belongs to the UPF0756 family.

Its subcellular location is the cell membrane. The sequence is that of UPF0756 membrane protein YE1142 from Yersinia enterocolitica serotype O:8 / biotype 1B (strain NCTC 13174 / 8081).